Here is a 1171-residue protein sequence, read N- to C-terminus: ATP-dependent helicase/deoxyribonuclease subunit B (1171 aa).

The region spanning 1–390 (MSLRFVIGRA…HPLVECIRSA (390 aa)) is the UvrD-like helicase ATP-binding domain. 8-15 (GRAGSGKS) provides a ligand contact to ATP. Residues 281-587 (MEQPRFHSPA…QFANIPPSLD (307 aa)) form the UvrD-like helicase C-terminal domain. [4Fe-4S] cluster is bound by residues Cys-805, Cys-1129, Cys-1132, and Cys-1138.

It belongs to the helicase family. AddB/RexB type 1 subfamily. As to quaternary structure, heterodimer of AddA and AddB. Requires Mg(2+) as cofactor. [4Fe-4S] cluster serves as cofactor.

Its function is as follows. The heterodimer acts as both an ATP-dependent DNA helicase and an ATP-dependent, dual-direction single-stranded exonuclease. Recognizes the chi site generating a DNA molecule suitable for the initiation of homologous recombination. The AddB subunit has 5' -&gt; 3' nuclease activity but not helicase activity. In Bacillus cereus (strain ATCC 10987 / NRS 248), this protein is ATP-dependent helicase/deoxyribonuclease subunit B.